A 948-amino-acid chain; its full sequence is Protocadherin alpha-2 (948 aa).

A signal peptide spans 1-22; sequence MASSIRRGRGAWTRLLSLLLLA. The Extracellular segment spans residues 23 to 697; the sequence is AWEVGSGQLR…GSEATLVDVN (675 aa). 6 consecutive Cadherin domains span residues 30-133, 157-242, 243-350, 351-455, 456-565, and 588-678; these read QLRY…PPIF, ASDA…EPTF, AQSV…TPEV, SITS…APAF, AQPE…APAL, and GHVV…APKA. 4 N-linked (GlcNAc...) asparagine glycosylation sites follow: Asn-257, Asn-265, Asn-362, and Asn-548. The helical transmembrane segment at 698–718 threads the bilayer; it reads VYLIIAICAVSSLLVLTVLLY. The Cytoplasmic portion of the chain corresponds to 719–948; sequence TALRCSVPPT…GNSTTDNSDQ (230 aa). The stretch at 734 to 737 is one PXXP 1 repeat; sequence PGKP. Residues 734-892 are 5 X 4 AA repeats of P-X-X-P; that stretch reads PGKPTLVCSS…PDKFIIPGSP (159 aa). Disordered regions lie at residues 754–801, 829–854, and 868–948; these read RRQR…RQPN, GPGG…EVSP, and KYGP…NSDQ. The span at 783–795 shows a compositional bias: basic and acidic residues; sequence AEEKQLSESEYVG. 4 PXXP repeats span residues 797–800, 830–833, 871–874, and 889–892; these read PRQP, PGGP, PGNP, and PGSP. Positions 907 to 921 are enriched in basic and acidic residues; sequence DKSDFITFGKKEETK.

The protein resides in the cell membrane. Functionally, potential calcium-dependent cell-adhesion protein. May be involved in the establishment and maintenance of specific neuronal connections in the brain. This chain is Protocadherin alpha-2 (PCDHA2), found in Homo sapiens (Human).